The following is a 323-amino-acid chain: Voltage-dependent calcium channel gamma-2 subunit (323 aa).

A helical transmembrane segment spans residues M10–T30. An N-linked (GlcNAc...) asparagine glycan is attached at N48. The next 3 helical transmembrane spans lie at S104–A124, I134–I154, and F182–I202. The interval Y233–N261 is disordered. S253 bears the Phosphoserine mark. Y271 is modified (phosphotyrosine). T321 is modified (phosphothreonine; by PKA).

The protein belongs to the PMP-22/EMP/MP20 family. CACNG subfamily. The L-type calcium channel is composed of five subunits: alpha-1, alpha-2/delta, beta and gamma. Interacts with the PDZ domains of DLG4/PSD-95 and DLG1/SAP97. May interact with GOPC. Acts as an auxiliary subunit for AMPA-selective glutamate receptors (AMPARs). Found in a complex with GRIA1, GRIA2, GRIA3, GRIA4, CNIH2, CNIH3, CACNG3, CACNG4, CACNG5, CACNG7 and CACNG8. Interacts with GRIA1 and GRIA2. Interacts with MPP2. Phosphorylation of Thr-321 by PKA impairs interaction with DLG1 and DLG4. Brain.

It localises to the membrane. The protein resides in the synapse. It is found in the synaptosome. Functionally, regulates the trafficking and gating properties of AMPA-selective glutamate receptors (AMPARs). Promotes their targeting to the cell membrane and synapses and modulates their gating properties by slowing their rates of activation, deactivation and desensitization. Does not show subunit-specific AMPA receptor regulation and regulates all AMPAR subunits. Thought to stabilize the calcium channel in an inactivated (closed) state. This Mus musculus (Mouse) protein is Voltage-dependent calcium channel gamma-2 subunit (Cacng2).